The primary structure comprises 342 residues: Serine/threonine-protein kinase-transforming protein mos (342 aa).

The region spanning 63-338 (VCLMHRLGSG…LLQRDLKAFR (276 aa)) is the Protein kinase domain. Residues 69 to 77 (LGSGGFGSV) and Lys90 each bind ATP. The active-site Proton acceptor is the Asp198.

It belongs to the protein kinase superfamily. Ser/Thr protein kinase family.

It carries out the reaction L-seryl-[protein] + ATP = O-phospho-L-seryl-[protein] + ADP + H(+). It catalyses the reaction L-threonyl-[protein] + ATP = O-phospho-L-threonyl-[protein] + ADP + H(+). The polypeptide is Serine/threonine-protein kinase-transforming protein mos (V-MOS) (Myeloproliferative sarcoma virus (isolate ts159)).